A 130-amino-acid chain; its full sequence is Putative transposase for insertion sequence element IS6501 (130 aa).

It belongs to the transposase 11 family.

Its function is as follows. Involved in the transposition of the insertion sequence. This is Putative transposase for insertion sequence element IS6501 from Brucella ovis (strain ATCC 25840 / 63/290 / NCTC 10512).